Reading from the N-terminus, the 216-residue chain is Peroxiredoxin (216 aa).

The region spanning 2–158 (IVIGEKFPEV…ILRLVKALKI (157 aa)) is the Thioredoxin domain. Cys46 serves as the catalytic Cysteine sulfenic acid (-SOH) intermediate. Arg121 lines the substrate pocket. Cys205 and Cys211 form a disulfide bridge.

The protein belongs to the peroxiredoxin family. Prx6 subfamily. Homodecamer. Pentamer of dimers that assemble into a ring structure.

It localises to the cytoplasm. The catalysed reaction is a hydroperoxide + [thioredoxin]-dithiol = an alcohol + [thioredoxin]-disulfide + H2O. In terms of biological role, thiol-specific peroxidase that catalyzes the reduction of hydrogen peroxide and organic hydroperoxides to water and alcohols, respectively. Plays a role in cell protection against oxidative stress by detoxifying peroxides. This Pyrococcus furiosus (strain ATCC 43587 / DSM 3638 / JCM 8422 / Vc1) protein is Peroxiredoxin.